The primary structure comprises 164 residues: Choriogonadotropin subunit beta (164 aa).

An N-terminal signal peptide occupies residues 1–20 (MEMLQGLLLCLLLSTGGAWA). 6 disulfide bridges follow: Cys-29–Cys-77, Cys-43–Cys-92, Cys-46–Cys-130, Cys-54–Cys-108, Cys-58–Cys-110, and Cys-113–Cys-120. A glycan (N-linked (GlcNAc...) asparagine) is linked at Asn-50. Residues 133–164 (HTSQDSSSKDPPRNLTSPSQLPEPADAPLVPQ) are disordered. O-linked (GalNAc...) serine glycosylation occurs at Ser-140. Asn-146 carries N-linked (GlcNAc...) asparagine glycosylation. An O-linked (GalNAc...) serine glycan is attached at Ser-151.

The protein belongs to the glycoprotein hormones subunit beta family. In terms of assembly, heterodimer of a common alpha chain and a unique beta chain which confers biological specificity to thyrotropin, lutropin, follitropin and gonadotropin.

It is found in the secreted. Its function is as follows. Stimulates the ovaries to synthesize the steroids that are essential for the maintenance of pregnancy. In Aotus nancymaae (Ma's night monkey), this protein is Choriogonadotropin subunit beta (CGB).